The primary structure comprises 566 residues: Oxygen-dependent choline dehydrogenase (566 aa).

7-36 (DYIICGAGSAGNVLATRLTEDPNVTVLLLE) lines the FAD pocket. The segment at 180–203 (NGYQQEGFGPMDRTVTPKGRRAST) is disordered. The Proton acceptor role is filled by His-474.

Belongs to the GMC oxidoreductase family. FAD is required as a cofactor.

The catalysed reaction is choline + A = betaine aldehyde + AH2. It carries out the reaction betaine aldehyde + NAD(+) + H2O = glycine betaine + NADH + 2 H(+). It functions in the pathway amine and polyamine biosynthesis; betaine biosynthesis via choline pathway; betaine aldehyde from choline (cytochrome c reductase route): step 1/1. In terms of biological role, involved in the biosynthesis of the osmoprotectant glycine betaine. Catalyzes the oxidation of choline to betaine aldehyde and betaine aldehyde to glycine betaine at the same rate. This chain is Oxygen-dependent choline dehydrogenase, found in Burkholderia ambifaria (strain MC40-6).